A 206-amino-acid chain; its full sequence is Cytidylate kinase (206 aa).

7-15 serves as a coordination point for ATP; that stretch reads GVAASGKSS.

It belongs to the cytidylate kinase family. Type 1 subfamily.

It is found in the cytoplasm. It carries out the reaction CMP + ATP = CDP + ADP. The enzyme catalyses dCMP + ATP = dCDP + ADP. The polypeptide is Cytidylate kinase (Deinococcus radiodurans (strain ATCC 13939 / DSM 20539 / JCM 16871 / CCUG 27074 / LMG 4051 / NBRC 15346 / NCIMB 9279 / VKM B-1422 / R1)).